The chain runs to 333 residues: tRNA-dihydrouridine(16) synthase (333 aa).

FMN contacts are provided by residues 19 to 21 (PMQ) and glutamine 80. The active-site Proton donor is the cysteine 110. Residues lysine 151, 211–213 (NGD), and 235–236 (GR) contribute to the FMN site.

Belongs to the Dus family. DusC subfamily. FMN is required as a cofactor.

The catalysed reaction is 5,6-dihydrouridine(16) in tRNA + NADP(+) = uridine(16) in tRNA + NADPH + H(+). It carries out the reaction 5,6-dihydrouridine(16) in tRNA + NAD(+) = uridine(16) in tRNA + NADH + H(+). In terms of biological role, catalyzes the synthesis of 5,6-dihydrouridine (D), a modified base found in the D-loop of most tRNAs, via the reduction of the C5-C6 double bond in target uridines. Specifically modifies U16 in tRNAs. This Neisseria meningitidis serogroup A / serotype 4A (strain DSM 15465 / Z2491) protein is tRNA-dihydrouridine(16) synthase.